We begin with the raw amino-acid sequence, 233 residues long: Uracil-DNA glycosylase (233 aa).

Catalysis depends on Asp70, which acts as the Proton acceptor.

Belongs to the uracil-DNA glycosylase (UDG) superfamily. UNG family.

The protein resides in the cytoplasm. It carries out the reaction Hydrolyzes single-stranded DNA or mismatched double-stranded DNA and polynucleotides, releasing free uracil.. Functionally, excises uracil residues from the DNA which can arise as a result of misincorporation of dUMP residues by DNA polymerase or due to deamination of cytosine. The chain is Uracil-DNA glycosylase from Helicobacter pylori (strain G27).